A 364-amino-acid chain; its full sequence is Dihydroorotate dehydrogenase (quinone) (364 aa).

Residues 78-82 (AGFDK) and threonine 102 each bind FMN. Substrate is bound at residue lysine 82. 127-131 (NRMGF) serves as a coordination point for substrate. FMN-binding residues include asparagine 156 and asparagine 189. Asparagine 189 is a binding site for substrate. Serine 192 serves as the catalytic Nucleophile. Asparagine 194 is a binding site for substrate. Lysine 227 and threonine 255 together coordinate FMN. 256-257 (NT) provides a ligand contact to substrate. FMN-binding positions include glycine 285, glycine 314, and 335 to 336 (YT).

It belongs to the dihydroorotate dehydrogenase family. Type 2 subfamily. As to quaternary structure, monomer. The cofactor is FMN.

Its subcellular location is the cell membrane. The enzyme catalyses (S)-dihydroorotate + a quinone = orotate + a quinol. Its pathway is pyrimidine metabolism; UMP biosynthesis via de novo pathway; orotate from (S)-dihydroorotate (quinone route): step 1/1. Its function is as follows. Catalyzes the conversion of dihydroorotate to orotate with quinone as electron acceptor. This Thermosynechococcus vestitus (strain NIES-2133 / IAM M-273 / BP-1) protein is Dihydroorotate dehydrogenase (quinone).